The primary structure comprises 106 residues: uncharacterized protein (106 aa).

A run of 2 helical transmembrane segments spans residues 25–45 (VMNV…IHYI) and 62–82 (ICFL…NFQG).

The protein localises to the membrane. This is an uncharacterized protein from Saccharomyces cerevisiae (strain ATCC 204508 / S288c) (Baker's yeast).